Consider the following 78-residue polypeptide: Cytochrome c-551 (78 aa).

C14, C17, H18, and M55 together coordinate heme c.

Binds 1 heme c group covalently per subunit.

The sequence is that of Cytochrome c-551 from Halorhodospira halophila (Ectothiorhodospira halophila).